The following is a 517-amino-acid chain: Bifunctional purine biosynthesis protein PurH (517 aa).

In terms of domain architecture, MGS-like spans 1–145; sequence MSPLALVSVS…KNHKDVSVLV (145 aa).

It belongs to the PurH family.

The enzyme catalyses (6R)-10-formyltetrahydrofolate + 5-amino-1-(5-phospho-beta-D-ribosyl)imidazole-4-carboxamide = 5-formamido-1-(5-phospho-D-ribosyl)imidazole-4-carboxamide + (6S)-5,6,7,8-tetrahydrofolate. It carries out the reaction IMP + H2O = 5-formamido-1-(5-phospho-D-ribosyl)imidazole-4-carboxamide. The protein operates within purine metabolism; IMP biosynthesis via de novo pathway; 5-formamido-1-(5-phospho-D-ribosyl)imidazole-4-carboxamide from 5-amino-1-(5-phospho-D-ribosyl)imidazole-4-carboxamide (10-formyl THF route): step 1/1. It participates in purine metabolism; IMP biosynthesis via de novo pathway; IMP from 5-formamido-1-(5-phospho-D-ribosyl)imidazole-4-carboxamide: step 1/1. This Prochlorococcus marinus (strain AS9601) protein is Bifunctional purine biosynthesis protein PurH.